The chain runs to 389 residues: 2-aminoethylphosphonate--pyruvate transaminase 1 (389 aa).

Lys196 is modified (N6-(pyridoxal phosphate)lysine).

It belongs to the class-V pyridoxal-phosphate-dependent aminotransferase family. PhnW subfamily. As to quaternary structure, homodimer. The cofactor is pyridoxal 5'-phosphate.

The catalysed reaction is (2-aminoethyl)phosphonate + pyruvate = phosphonoacetaldehyde + L-alanine. Its function is as follows. Involved in phosphonate degradation. This is 2-aminoethylphosphonate--pyruvate transaminase 1 from Paraburkholderia xenovorans (strain LB400).